The chain runs to 174 residues: Crossover junction endodeoxyribonuclease RuvC (174 aa).

Residues Asp-8, Glu-67, and Asp-139 contribute to the active site. 3 residues coordinate Mg(2+): Asp-8, Glu-67, and Asp-139.

Belongs to the RuvC family. In terms of assembly, homodimer which binds Holliday junction (HJ) DNA. The HJ becomes 2-fold symmetrical on binding to RuvC with unstacked arms; it has a different conformation from HJ DNA in complex with RuvA. In the full resolvosome a probable DNA-RuvA(4)-RuvB(12)-RuvC(2) complex forms which resolves the HJ. The cofactor is Mg(2+).

It is found in the cytoplasm. It catalyses the reaction Endonucleolytic cleavage at a junction such as a reciprocal single-stranded crossover between two homologous DNA duplexes (Holliday junction).. Functionally, the RuvA-RuvB-RuvC complex processes Holliday junction (HJ) DNA during genetic recombination and DNA repair. Endonuclease that resolves HJ intermediates. Cleaves cruciform DNA by making single-stranded nicks across the HJ at symmetrical positions within the homologous arms, yielding a 5'-phosphate and a 3'-hydroxyl group; requires a central core of homology in the junction. The consensus cleavage sequence is 5'-(A/T)TT(C/G)-3'. Cleavage occurs on the 3'-side of the TT dinucleotide at the point of strand exchange. HJ branch migration catalyzed by RuvA-RuvB allows RuvC to scan DNA until it finds its consensus sequence, where it cleaves and resolves the cruciform DNA. The sequence is that of Crossover junction endodeoxyribonuclease RuvC from Pseudomonas paraeruginosa (strain DSM 24068 / PA7) (Pseudomonas aeruginosa (strain PA7)).